Consider the following 454-residue polypeptide: Cobyrinate a,c-diamide synthase (454 aa).

The GATase cobBQ-type domain occupies 247–442 (KIGIAMDSAF…IHAHWASNPN (196 aa)). Cys329 functions as the Nucleophile in the catalytic mechanism.

The protein belongs to the CobB/CbiA family. The cofactor is Mg(2+).

The enzyme catalyses cob(II)yrinate + 2 L-glutamine + 2 ATP + 2 H2O = cob(II)yrinate a,c diamide + 2 L-glutamate + 2 ADP + 2 phosphate + 2 H(+). The protein operates within cofactor biosynthesis; adenosylcobalamin biosynthesis; cob(II)yrinate a,c-diamide from sirohydrochlorin (anaerobic route): step 10/10. Catalyzes the ATP-dependent amidation of the two carboxylate groups at positions a and c of cobyrinate, using either L-glutamine or ammonia as the nitrogen source. The polypeptide is Cobyrinate a,c-diamide synthase (Leptospira interrogans serogroup Icterohaemorrhagiae serovar copenhageni (strain Fiocruz L1-130)).